The primary structure comprises 376 residues: Alanine racemase (376 aa).

The active-site Proton acceptor; specific for D-alanine is lysine 36. Lysine 36 is modified (N6-(pyridoxal phosphate)lysine). A substrate-binding site is contributed by arginine 134. Tyrosine 266 functions as the Proton acceptor; specific for L-alanine in the catalytic mechanism. Position 314 (methionine 314) interacts with substrate.

Belongs to the alanine racemase family. Pyridoxal 5'-phosphate serves as cofactor.

The enzyme catalyses L-alanine = D-alanine. The protein operates within amino-acid biosynthesis; D-alanine biosynthesis; D-alanine from L-alanine: step 1/1. Catalyzes the interconversion of L-alanine and D-alanine. May also act on other amino acids. This chain is Alanine racemase (alr), found in Nitratidesulfovibrio vulgaris (strain ATCC 29579 / DSM 644 / CCUG 34227 / NCIMB 8303 / VKM B-1760 / Hildenborough) (Desulfovibrio vulgaris).